The chain runs to 704 residues: Polyribonucleotide nucleotidyltransferase (704 aa).

2 residues coordinate Mg(2+): aspartate 487 and aspartate 493. In terms of domain architecture, KH spans 554–613 (PRLLTIKIHPDKIREVIGKGGSTIQAITKETGTQIDIQDDGTIIIASVNAIAAQAAKSRI). Positions 623–691 (GRIYEGKVAK…KQGRIRLSIK (69 aa)) constitute an S1 motif domain.

It belongs to the polyribonucleotide nucleotidyltransferase family. As to quaternary structure, component of the RNA degradosome, which is a multiprotein complex involved in RNA processing and mRNA degradation. The cofactor is Mg(2+).

The protein localises to the cytoplasm. It carries out the reaction RNA(n+1) + phosphate = RNA(n) + a ribonucleoside 5'-diphosphate. Involved in mRNA degradation. Catalyzes the phosphorolysis of single-stranded polyribonucleotides processively in the 3'- to 5'-direction. The sequence is that of Polyribonucleotide nucleotidyltransferase from Xanthomonas axonopodis pv. citri (strain 306).